The chain runs to 365 residues: Anhydro-N-acetylmuramic acid kinase (365 aa).

12 to 19 contacts ATP; it reads GTSMDGMD.

It belongs to the anhydro-N-acetylmuramic acid kinase family.

The catalysed reaction is 1,6-anhydro-N-acetyl-beta-muramate + ATP + H2O = N-acetyl-D-muramate 6-phosphate + ADP + H(+). Its pathway is amino-sugar metabolism; 1,6-anhydro-N-acetylmuramate degradation. It participates in cell wall biogenesis; peptidoglycan recycling. Catalyzes the specific phosphorylation of 1,6-anhydro-N-acetylmuramic acid (anhMurNAc) with the simultaneous cleavage of the 1,6-anhydro ring, generating MurNAc-6-P. Is required for the utilization of anhMurNAc either imported from the medium or derived from its own cell wall murein, and thus plays a role in cell wall recycling. The protein is Anhydro-N-acetylmuramic acid kinase of Pseudomonas paraeruginosa (strain DSM 24068 / PA7) (Pseudomonas aeruginosa (strain PA7)).